Consider the following 354-residue polypeptide: Uroporphyrinogen decarboxylase (354 aa).

Residues 27 to 31 (RQAGR), Asp-77, Tyr-154, Thr-209, and His-327 contribute to the substrate site.

The protein belongs to the uroporphyrinogen decarboxylase family. Homodimer.

It localises to the cytoplasm. It carries out the reaction uroporphyrinogen III + 4 H(+) = coproporphyrinogen III + 4 CO2. The protein operates within porphyrin-containing compound metabolism; protoporphyrin-IX biosynthesis; coproporphyrinogen-III from 5-aminolevulinate: step 4/4. Functionally, catalyzes the decarboxylation of four acetate groups of uroporphyrinogen-III to yield coproporphyrinogen-III. The sequence is that of Uroporphyrinogen decarboxylase from Pectobacterium carotovorum subsp. carotovorum (strain PC1).